Consider the following 200-residue polypeptide: Protein GrpE (200 aa).

A compositionally biased stretch (basic and acidic residues) spans 1 to 12 (MSNEEIKNKDEQ). Residues 1-30 (MSNEEIKNKDEQLQQDAVETEAEVVGTDAD) form a disordered region.

It belongs to the GrpE family. In terms of assembly, homodimer.

The protein localises to the cytoplasm. Functionally, participates actively in the response to hyperosmotic and heat shock by preventing the aggregation of stress-denatured proteins, in association with DnaK and GrpE. It is the nucleotide exchange factor for DnaK and may function as a thermosensor. Unfolded proteins bind initially to DnaJ; upon interaction with the DnaJ-bound protein, DnaK hydrolyzes its bound ATP, resulting in the formation of a stable complex. GrpE releases ADP from DnaK; ATP binding to DnaK triggers the release of the substrate protein, thus completing the reaction cycle. Several rounds of ATP-dependent interactions between DnaJ, DnaK and GrpE are required for fully efficient folding. The polypeptide is Protein GrpE (Vibrio cholerae serotype O1 (strain ATCC 39315 / El Tor Inaba N16961)).